The sequence spans 92 residues: FMRFamide-like neuropeptides 16 (92 aa).

The N-terminal stretch at 1–24 (MNFSGFEFSSIVAFFLLILQLSTA) is a signal peptide. The propeptide occupies 25-55 (AVLPADYAYGVADEMSALPDSGSLFAEQRPS). F64, F74, and F84 each carry phenylalanine amide. Positions 87 to 92 (SAPFEQ) are excised as a propeptide.

This sequence belongs to the FARP (FMRFamide related peptide) family. Each flp gene is expressed in a distinct set of neurons.

The protein resides in the secreted. Functionally, FMRFamides and FMRFamide-like peptides are neuropeptides. AQTFVRF-amide inhibits the activity of dissected pharyngeal myogenic muscle system. The protein is FMRFamide-like neuropeptides 16 of Caenorhabditis elegans.